Reading from the N-terminus, the 156-residue chain is ATP synthase subunit b (156 aa).

Residues 7-26 traverse the membrane as a helical segment; it reads FIGQMVAFAIFIYLTYRYVW.

The protein belongs to the ATPase B chain family. As to quaternary structure, F-type ATPases have 2 components, F(1) - the catalytic core - and F(0) - the membrane proton channel. F(1) has five subunits: alpha(3), beta(3), gamma(1), delta(1), epsilon(1). F(0) has three main subunits: a(1), b(2) and c(10-14). The alpha and beta chains form an alternating ring which encloses part of the gamma chain. F(1) is attached to F(0) by a central stalk formed by the gamma and epsilon chains, while a peripheral stalk is formed by the delta and b chains.

The protein localises to the cell inner membrane. Its function is as follows. F(1)F(0) ATP synthase produces ATP from ADP in the presence of a proton or sodium gradient. F-type ATPases consist of two structural domains, F(1) containing the extramembraneous catalytic core and F(0) containing the membrane proton channel, linked together by a central stalk and a peripheral stalk. During catalysis, ATP synthesis in the catalytic domain of F(1) is coupled via a rotary mechanism of the central stalk subunits to proton translocation. Component of the F(0) channel, it forms part of the peripheral stalk, linking F(1) to F(0). This chain is ATP synthase subunit b, found in Cellvibrio japonicus (strain Ueda107) (Pseudomonas fluorescens subsp. cellulosa).